A 357-amino-acid chain; its full sequence is Membrane-bound lytic murein transglycosylase C (357 aa).

Residues 1–15 form the signal peptide; the sequence is MKKYLLLALLPFLYA. C16 is lipidated: N-palmitoyl cysteine. C16 carries S-diacylglycerol cysteine lipidation.

This sequence belongs to the transglycosylase Slt family.

The protein localises to the cell outer membrane. It carries out the reaction Exolytic cleavage of the (1-&gt;4)-beta-glycosidic linkage between N-acetylmuramic acid (MurNAc) and N-acetylglucosamine (GlcNAc) residues in peptidoglycan, from either the reducing or the non-reducing ends of the peptidoglycan chains, with concomitant formation of a 1,6-anhydrobond in the MurNAc residue.. In terms of biological role, murein-degrading enzyme. May play a role in recycling of muropeptides during cell elongation and/or cell division. This chain is Membrane-bound lytic murein transglycosylase C, found in Haemophilus influenzae (strain PittGG).